The sequence spans 330 residues: G-protein coupled receptor 3 (330 aa).

The Extracellular portion of the chain corresponds to 1 to 42 (MMWGAGSSMAWFSAGSGSVNVSSVDPVEEPTGPATLLPSPRA). An N-linked (GlcNAc...) asparagine glycan is attached at asparagine 20. A helical transmembrane segment spans residues 43–62 (WDVVLCISGTLVSCENALVV). At 63 to 74 (AIIVGTPAFRAP) the chain is on the cytoplasmic side. A helical transmembrane segment spans residues 75 to 98 (MFLLVGSLAVADLLAGLGLVLHFA). Residues 99 to 110 (ADFCIGSPEMSL) are Extracellular-facing. The helical transmembrane segment at 111–132 (MLVGVLAMAFTASIGSLLAITV) threads the bilayer. Residues 133–153 (DRYLSLYNALTYYSETTVTRT) lie on the Cytoplasmic side of the membrane. Residues 154–173 (YVMLALVWVGALGLGLVPVL) traverse the membrane as a helical segment. Over 174–198 (AWNCRDGLTTCGVVYPLSKNHLVVL) the chain is Extracellular. A helical transmembrane segment spans residues 199–217 (AIAFFMVFGIMLQLYAQIC). Over 218–245 (RIVCRHAQQIALQRHLLPASHYVATRKG) the chain is Cytoplasmic. A helical transmembrane segment spans residues 246-272 (IATLAVVLGAFAACWLPFTVYCLLGDA). Residues 273 to 277 (DSPRL) are Extracellular-facing. A helical transmembrane segment spans residues 278 to 299 (YTYLTLLPATYNSMINPVIYAF). Over 300–330 (RNQDVQKVLWAICCCCSTSKIPFRSRSPSDV) the chain is Cytoplasmic. Cysteine 313 carries S-palmitoyl cysteine lipidation. Phosphoserine occurs at positions 324, 326, and 328.

The protein belongs to the G-protein coupled receptor 1 family. Expressed in both the forebrain and hindbrain, with the highest level in habenula. Lower level expression in the testis. Expressed in several metabolically active peripheral tissues, although at lower levels than in the central nervous system (CNS).

It is found in the cell membrane. Functionally, constitutively active G-protein coupled receptor that maintains high 3'-5'-cyclic adenosine monophosphate (cAMP) levels that a plays a role in serveral processes including meiotic arrest in oocytes or neuronal development via activation of numerous intracellular signaling pathways. Acts as an essential activator of thermogenic adipocytes and drives thermogenesis via its intrinsic G(s)-coupling activity without the requirement of a ligand. Has a potential role in modulating a number of brain functions, including behavioral responses to stress, amyloid-beta peptide generation in neurons. Stimulates neurite outgrowth in cerebellar granular neurons modulated via PKA, ERK, and most strongly PI3K-mediated signaling pathways. The chain is G-protein coupled receptor 3 (Gpr3) from Mus musculus (Mouse).